An 855-amino-acid polypeptide reads, in one-letter code: MASFPETDFQICLLCKEMCGSPAPLSSSSSASSSSSQTSTSSAGGGGPGAAARRLHVLPCLHAFCRPCLEAHRLPAPGGAGPAEALKLRCPVCDQKVVLAEAAGMDALPSSAFLLSNLLDAVVATADEPPPKNGRAGGGPGGAGGHSNHRHHAHHPAQRAAAPAPQPPPGPAASPGSLLLRRPHGCSSCDEGNAASSRCLDCQEHLCDNCVRAHQRVRLTKDHYIERGPPGPAAASAAQQLGLGPPFAGAPFSILSVFPERLGFCQHHDDEVLHLYCDTCSVPICRECTLGRHGGHSFAYLQDALQDSRALTIQLLADAQQGRQAIQLSIEQAQTVAEQVEMKAKVVQSEVKAVTARHKKALEERECELLWKVEKIRQVKAKSLYLQVEKLRQNLNKLESTISAVQQVLEEGRALDILLARDRMLAQVQELKTIRGLLQPQEDDRVMFTPPDQALYLALKSFGFVSSGAFAPLTKAAGDGIKRALQGKVASFTVMGYDHNGEPRLSGGDLMSVVVLGPDGNLFGAEVSDQQNGTYVVSYRPQLEGEHLVSVTLYNQHIENSPFKVVVKSGRSYVGIGLPVLSFGSEGDGEGKLCRPWGVSVDKEGYIIVADRSNNRIQVFKPCGSFHHKFGTLGSRPGQFDRPAGVACDASRRIVVADKDNHRIQIFTFEGQFLLKFGEKGTKNGQFNYPWDVAVNSEGKILVSDTRNHRIQLFGPDGVFLNKYGFEGSLWKHFDSPRGVAFNHEGHLVVTDFNNHRLLVIHPDCQSARFLGSEGTGNGQFLRPQGVAVDQEGRIIVADSRNHRVQMFEANGSFLCKFGAQGSGFGQMDRPSGIAVTPEGLIVVVDFGNNRILIF.

An N-acetylalanine modification is found at alanine 2. The RING-type zinc finger occupies 12–94 (CLLCKEMCGS…ALKLRCPVCD (83 aa)). The span at 26–42 (SSSSSASSSSSQTSTSS) shows a compositional bias: low complexity. Disordered regions lie at residues 26–48 (SSSSSASSSSSQTSTSSAGGGGP) and 126–177 (ADEP…SPGS). Residues 135–145 (RAGGGPGGAGG) are compositionally biased toward gly residues. A compositionally biased stretch (basic residues) spans 147–157 (SNHRHHAHHPA). A B box-type 1; atypical zinc finger spans residues 181 to 228 (RRPHGCSSCDEGNAASSRCLDCQEHLCDNCVRAHQRVRLTKDHYIERG). The segment at 260–301 (ERLGFCQHHDDEVLHLYCDTCSVPICRECTLGRHGGHSFAYL) adopts a B box-type 2 zinc-finger fold. Zn(2+) contacts are provided by cysteine 265, histidine 268, cysteine 288, and histidine 293. Residues 378 to 414 (QVKAKSLYLQVEKLRQNLNKLESTISAVQQVLEEGRA) are a coiled coil. One copy of the Filamin repeat lies at 466-567 (SSGAFAPLTK…IENSPFKVVV (102 aa)). NHL repeat units lie at residues 580-623 (VLSF…FKPC), 627-670 (HHKF…FTFE), 674-717 (LLKF…FGPD), 721-764 (LNKY…IHPD), 768-811 (ARFL…FEAN), and 815-855 (LCKF…ILIF).

The protein belongs to the TRIM/RBCC family. As to quaternary structure, interacts (via NHL repeats) with AGO2; the interaction increases in presence of RNA. Interacts with HSP90AA1. Interacts (via NHL repeats) with MOV10, PABPC1, PUM1, PUM2, STAU2, XRN1 and XRN2 in an RNA-dependent manner. Interacts with SHCBP1; leading to enhance its stability. Autoubiquitinated.

The protein localises to the cytoplasm. The protein resides in the P-body. The enzyme catalyses S-ubiquitinyl-[E2 ubiquitin-conjugating enzyme]-L-cysteine + [acceptor protein]-L-lysine = [E2 ubiquitin-conjugating enzyme]-L-cysteine + N(6)-ubiquitinyl-[acceptor protein]-L-lysine.. It functions in the pathway protein modification; protein ubiquitination. Its function is as follows. E3 ubiquitin-protein ligase that cooperates with the microRNAs (miRNAs) machinery and promotes embryonic stem cells proliferation and maintenance. Binds to miRNAs and associates with AGO2, participating in post-transcriptional repression of transcripts such as CDKN1A. In addition, participates in post-transcriptional mRNA repression in a miRNA independent mechanism. Facilitates the G1-S transition to promote rapid embryonic stem cell self-renewal by repressing CDKN1A expression. Required to maintain proliferation and prevent premature differentiation of neural progenitor cells during early neural development: positively regulates FGF signaling by controlling the stability of SHCBP1. Specific regulator of miRNA biogenesis. Binds to miRNA MIR29A hairpin and postranscriptionally modulates MIR29A levels, which indirectly regulates TET proteins expression. In Rattus norvegicus (Rat), this protein is E3 ubiquitin-protein ligase TRIM71 (Trim71).